The primary structure comprises 464 residues: Serine/threonine-protein kinase 38-like (464 aa).

At Ala2 the chain carries N-acetylalanine. The interval Lys63 to Asp88 is S100B binding. Thr75 is modified (phosphothreonine). The 294-residue stretch at Phe90 to Phe383 folds into the Protein kinase domain. ATP-binding positions include Ile96 to Val104 and Lys119. Residue Asp213 is the Proton acceptor of the active site. Ser282 carries the phosphoserine; by autocatalysis modification. One can recognise an AGC-kinase C-terminal domain in the interval Glu384–Gly453. A Phosphothreonine; by STK24/MST3 modification is found at Thr442.

It belongs to the protein kinase superfamily. AGC Ser/Thr protein kinase family. As to quaternary structure, homodimeric S100B binds two molecules of STK38L. Interacts with MICAL1; leading to inhibit the protein kinase activity by antagonizing activation by MST1/STK4. Interacts with MOB1 and MOB2. It depends on Mg(2+) as a cofactor. In terms of tissue distribution, ubiquitously expressed with highest levels observed in the thymus.

The protein localises to the cytoplasm. It localises to the cytoskeleton. The protein resides in the membrane. The enzyme catalyses L-seryl-[protein] + ATP = O-phospho-L-seryl-[protein] + ADP + H(+). It carries out the reaction L-threonyl-[protein] + ATP = O-phospho-L-threonyl-[protein] + ADP + H(+). Its activity is regulated as follows. Activated by binding of S100B which releases autoinhibitory N-lobe interactions, enabling ATP to bind and the autophosphorylation of Ser-282. Thr-442 then undergoes calcium-dependent phosphorylation by STK24/MST3. Interactions between phosphorylated Thr-442 and the N-lobe promote additional structural changes that complete the activation of the kinase. Autoinhibition is also released by the binding of MOB1/MOBKL1A and MOB2/HCCA2 to the N-terminal of STK38L. Involved in the regulation of structural processes in differentiating and mature neuronal cells. This is Serine/threonine-protein kinase 38-like from Homo sapiens (Human).